The sequence spans 420 residues: Alpha-ketoglutarate-dependent xanthine dioxygenase xan-1 (420 aa).

Positions 157 and 159 each coordinate Fe cation. Residues threonine 206 and tryptophan 336 each coordinate 2-oxoglutarate. Histidine 351 contributes to the Fe cation binding site. Arginine 366 contributes to the 2-oxoglutarate binding site. Arginine 366 provides a ligand contact to substrate.

Belongs to the TfdA dioxygenase family. It depends on Fe(2+) as a cofactor.

It localises to the cytoplasm. The protein resides in the cytosol. It catalyses the reaction xanthine + 2-oxoglutarate + O2 = urate + succinate + CO2. Functionally, alpha-ketoglutarate-dependent xanthine dioxygenase is a non-heme mononuclear Fe(2+) enzyme that decarboxylates alpha-ketoglutarate to succinate and CO(2) while hydroxylating xanthine to generate uric acid. Allows xanthine utilization as a nitrogen source. The polypeptide is Alpha-ketoglutarate-dependent xanthine dioxygenase xan-1 (Neurospora crassa (strain ATCC 24698 / 74-OR23-1A / CBS 708.71 / DSM 1257 / FGSC 987)).